The sequence spans 207 residues: Large ribosomal subunit protein uL4 (207 aa).

The disordered stretch occupies residues 49-78 (HAVKNRSAVSGGGRKPWRQKGTGRARQGSI).

It belongs to the universal ribosomal protein uL4 family. Part of the 50S ribosomal subunit.

One of the primary rRNA binding proteins, this protein initially binds near the 5'-end of the 23S rRNA. It is important during the early stages of 50S assembly. It makes multiple contacts with different domains of the 23S rRNA in the assembled 50S subunit and ribosome. Functionally, forms part of the polypeptide exit tunnel. This Streptococcus pneumoniae serotype 2 (strain D39 / NCTC 7466) protein is Large ribosomal subunit protein uL4.